The chain runs to 88 residues: Mitochondrial import inner membrane translocase subunit Tim10 (88 aa).

Positions 25 to 49 (CSAKCISKYNEGDLNVGESVCAERC) match the Twin CX3C motif motif. 2 disulfide bridges follow: C25/C49 and C29/C45. A disordered region spans residues 63–88 (KMSGTQPGQEVPQEAPAAAPEKKGWF). Residues 68–81 (QPGQEVPQEAPAAA) show a composition bias toward low complexity.

This sequence belongs to the small Tim family. As to quaternary structure, heterohexamer; composed of 3 copies of timm9 and 3 copies of timm10, named soluble 70 kDa complex. Associates directly with the TIM22 complex, whose core is composed of timm22. Interacts with the transmembrane regions of multi-pass transmembrane proteins in transit.

It localises to the mitochondrion inner membrane. Component of the TIM22 complex, a complex that mediates the import and insertion of multi-pass transmembrane proteins into the mitochondrial inner membrane. The TIM22 complex forms a twin-pore translocase that uses the membrane potential as external driving force. The sequence is that of Mitochondrial import inner membrane translocase subunit Tim10 (timm10) from Dictyostelium discoideum (Social amoeba).